The sequence spans 371 residues: Beta sliding clamp (371 aa).

This sequence belongs to the beta sliding clamp family. As to quaternary structure, forms a ring-shaped head-to-tail homodimer around DNA which binds and tethers DNA polymerases and other proteins to the DNA. The DNA replisome complex has a single clamp-loading complex (3 tau and 1 each of delta, delta', psi and chi subunits) which binds 3 Pol III cores (1 core on the leading strand and 2 on the lagging strand) each with a beta sliding clamp dimer. Additional proteins in the replisome are other copies of gamma, psi and chi, Ssb, DNA helicase and RNA primase.

It localises to the cytoplasm. In terms of biological role, confers DNA tethering and processivity to DNA polymerases and other proteins. Acts as a clamp, forming a ring around DNA (a reaction catalyzed by the clamp-loading complex) which diffuses in an ATP-independent manner freely and bidirectionally along dsDNA. Initially characterized for its ability to contact the catalytic subunit of DNA polymerase III (Pol III), a complex, multichain enzyme responsible for most of the replicative synthesis in bacteria; Pol III exhibits 3'-5' exonuclease proofreading activity. The beta chain is required for initiation of replication as well as for processivity of DNA replication. This Treponema pallidum (strain Nichols) protein is Beta sliding clamp (dnaN).